Consider the following 144-residue polypeptide: Cornifin-A (144 aa).

Residues 1 to 41 (MSSHQQKQPCTVPPQLHQQQVKQPCQPPPQEPCAPKTKDPC) are disordered. Low complexity predominate over residues 13–24 (PPQLHQQQVKQP). Repeat copies occupy residues 27–34 (PPPQEPCA), 35–42 (PKTKDPCH), 43–49 (PVPEPCN), 50–57 (PKGPEPCH), 58–65 (PKAPEPCH), 66–73 (PKAPEPCN), 74–81 (PKVPEPCQ), 82–89 (PKVPEPCQ), 90–97 (PKVPEPCN), 98–105 (PKVPEPCQ), 106–113 (PKAPEPCH), 114–121 (PKAPEPCH), and 122–129 (PVVPEPCP). Residues 27–129 (PPPQEPCAPK…CHPVVPEPCP (103 aa)) form a 13 X 8 AA approximate tandem repeats region.

It belongs to the cornifin (SPRR) family. As to expression, expressed in fetal periderm, hair follicles and in the thickened epidermis of the lip and footpad. Also present in the epithelia of various tissues such as the penis, vagina, forestomach, tongue and esophagus.

It is found in the cytoplasm. Functionally, cross-linked envelope protein of keratinocytes. It is a keratinocyte protein that first appears in the cell cytosol, but ultimately becomes cross-linked to membrane proteins by transglutaminase. All that results in the formation of an insoluble envelope beneath the plasma membrane. May participate widely in the construction of cell envelopes in cornifying epithelia characterized by either increased thickness or a requirement for extreme flexibility. The sequence is that of Cornifin-A (Sprr1a) from Mus musculus (Mouse).